An 80-amino-acid polypeptide reads, in one-letter code: Acyl carrier protein (80 aa).

The region spanning 4–79 is the Carrier domain; it reads DEIFSKVRSI…DVVNFIKKRK (76 aa). O-(pantetheine 4'-phosphoryl)serine is present on Ser-39.

This sequence belongs to the acyl carrier protein (ACP) family. 4'-phosphopantetheine is transferred from CoA to a specific serine of apo-ACP by AcpS. This modification is essential for activity because fatty acids are bound in thioester linkage to the sulfhydryl of the prosthetic group.

The protein localises to the cytoplasm. It functions in the pathway lipid metabolism; fatty acid biosynthesis. In terms of biological role, carrier of the growing fatty acid chain in fatty acid biosynthesis. This is Acyl carrier protein from Borreliella burgdorferi (strain ATCC 35210 / DSM 4680 / CIP 102532 / B31) (Borrelia burgdorferi).